The following is a 63-amino-acid chain: Cytochrome c oxidase subunit 5C-1 (63 aa).

A helical transmembrane segment spans residues 15–34; the sequence is SEVKELIIGSVLGLAAGGLW.

This sequence belongs to the cytochrome c oxidase subunit 5C family.

The protein localises to the mitochondrion inner membrane. This protein is one of the nuclear-coded polypeptide chains of cytochrome c oxidase, the terminal oxidase in mitochondrial electron transport. The protein is Cytochrome c oxidase subunit 5C-1 (COX5C1) of Helianthus annuus (Common sunflower).